Reading from the N-terminus, the 234-residue chain is 2,3-bisphosphoglycerate-dependent phosphoglycerate mutase 1 (234 aa).

Substrate contacts are provided by residues 14–21 (RHGQSIWN), 27–28 (TG), Arg-66, and 93–96 (ERHY). The active-site Tele-phosphohistidine intermediate is His-15. Catalysis depends on Glu-93, which acts as the Proton donor/acceptor.

It belongs to the phosphoglycerate mutase family. BPG-dependent PGAM subfamily. As to quaternary structure, homodimer.

It catalyses the reaction (2R)-2-phosphoglycerate = (2R)-3-phosphoglycerate. Its pathway is carbohydrate degradation; glycolysis; pyruvate from D-glyceraldehyde 3-phosphate: step 3/5. Catalyzes the interconversion of 2-phosphoglycerate and 3-phosphoglycerate. The chain is 2,3-bisphosphoglycerate-dependent phosphoglycerate mutase 1 from Nitrosomonas europaea (strain ATCC 19718 / CIP 103999 / KCTC 2705 / NBRC 14298).